We begin with the raw amino-acid sequence, 955 residues long: Leucine--tRNA ligase (955 aa).

Residues 66–77 (PYPSGSGLHVGH) carry the 'HIGH' region motif. Positions 725–729 (KMGKS) match the 'KMSKS' region motif. ATP is bound at residue Lys-728.

This sequence belongs to the class-I aminoacyl-tRNA synthetase family.

The protein localises to the cytoplasm. It catalyses the reaction tRNA(Leu) + L-leucine + ATP = L-leucyl-tRNA(Leu) + AMP + diphosphate. The polypeptide is Leucine--tRNA ligase (Saccharopolyspora erythraea (strain ATCC 11635 / DSM 40517 / JCM 4748 / NBRC 13426 / NCIMB 8594 / NRRL 2338)).